The following is a 216-amino-acid chain: MTDAPQHPQQPATGTPATPKAAPRVGRDVRIGATCGLLVALMVGAAYAAVPFYNWFCRATGFNGTTQVAKVAPSAAPLARTVAVRFDSNISGGLPWKFEPEQTEINVRIGEVATVYYTVTNHAATATTGQAAYNVTPLTVGSYFTKINCFCFTEQTLAPGEKREMAVVFYVDPSFAADSENDGVRTITLSYTFFPVKDAAPKPVAASEPDRPGGSI.

Residues 1–23 show a composition bias toward low complexity; that stretch reads MTDAPQHPQQPATGTPATPKAAP. Residues 1-24 form a disordered region; the sequence is MTDAPQHPQQPATGTPATPKAAPR. The Cytoplasmic portion of the chain corresponds to 1–26; that stretch reads MTDAPQHPQQPATGTPATPKAAPRVG. The helical; Signal-anchor for type II membrane protein transmembrane segment at 27–49 threads the bilayer; the sequence is RDVRIGATCGLLVALMVGAAYAA. Over 50 to 216 the chain is Periplasmic; sequence VPFYNWFCRA…SEPDRPGGSI (167 aa).

Belongs to the COX11/CtaG family.

It localises to the cell inner membrane. Functionally, exerts its effect at some terminal stage of cytochrome c oxidase synthesis, probably by being involved in the insertion of the copper B into subunit I. This is Cytochrome c oxidase assembly protein CtaG from Nitrobacter hamburgensis (strain DSM 10229 / NCIMB 13809 / X14).